The primary structure comprises 243 residues: MHELTIYHFMSDKLNLYSDIGNIIALRQRAKKRNIKVNVVEINETEGITFDECDIFFIGGGSDREQALATKELSKIKTPLKEAIEDGMPGLTICGGYQFLGKKYITPDGTELEGLGILDFYTESKTNRLTGDIVIESDTFGTIVGFENHGGRTYHDFGTLGHVTFGYGNNDEDKKEGIHYKNLLGTYLHGPILPKNYEITDYLLEKACERKGIPFEPKEIDNEAEIQAKQVLIDRANRQKKSR.

The region spanning 6–197 is the GATase cobBQ-type domain; the sequence is IYHFMSDKLN…LHGPILPKNY (192 aa). Catalysis depends on cysteine 94, which acts as the Nucleophile. Arginine 128 is a substrate binding site. Histidine 189 is a catalytic residue.

It belongs to the CobB/CobQ family. GatD subfamily. In terms of assembly, forms a heterodimer with MurT.

The catalysed reaction is beta-D-GlcNAc-(1-&gt;4)-Mur2Ac(oyl-L-Ala-gamma-D-Glu-L-Lys-D-Ala-D-Ala)-di-trans,octa-cis-undecaprenyl diphosphate + L-glutamine + ATP + H2O = beta-D-GlcNAc-(1-&gt;4)-Mur2Ac(oyl-L-Ala-D-isoglutaminyl-L-Lys-D-Ala-D-Ala)-di-trans,octa-cis-undecaprenyl diphosphate + L-glutamate + ADP + phosphate + H(+). It carries out the reaction L-glutamine + H2O = L-glutamate + NH4(+). The protein operates within cell wall biogenesis; peptidoglycan biosynthesis. In terms of biological role, the lipid II isoglutaminyl synthase complex catalyzes the formation of alpha-D-isoglutamine in the cell wall lipid II stem peptide. The GatD subunit catalyzes the hydrolysis of glutamine to glutamate and ammonia. The resulting ammonia molecule is channeled to the active site of MurT. The protein is Lipid II isoglutaminyl synthase (glutamine-hydrolyzing) subunit GatD of Staphylococcus aureus (strain N315).